Reading from the N-terminus, the 240-residue chain is Transcriptional activator protein VanR (240 aa).

Residues 169–234 (DAKPRAVLTA…QAITKAILGG (66 aa)) form the HTH luxR-type domain. Residues 193–212 (AWEIATIINTSERTVKFHFS) constitute a DNA-binding region (H-T-H motif).

The protein belongs to the autoinducer-regulated transcriptional regulatory protein family.

In terms of biological role, probable transcriptional activator. Binds to autoinducer molecule ODHL. In Vibrio anguillarum (Listonella anguillarum), this protein is Transcriptional activator protein VanR (vanR).